Consider the following 608-residue polypeptide: Eukaryotic translation initiation factor 2A (608 aa).

Residues 1–42 (MSAPNNNNNNTTTTTTTSPSPSQSSPTLTSVASNSTTTTTTE) form a disordered region. 4 WD repeats span residues 115-161 (INRP…ILYK), 207-255 (IKLQ…EYCS), 310-350 (NIKG…PLVD), and 351-393 (FGLN…RICG). Low complexity-rich tracts occupy residues 466–478 (SIQQQKESSPQPQ) and 520–544 (STFKPKQKPSSTTTTNNTTTTTTKP). 2 disordered regions span residues 466 to 499 (SIQQQKESSPQPQKYTPPSLRNMQAAPPVVTSPP) and 520 to 554 (STFKPKQKPSSTTTTNNTTTTTTKPAADEPKRELT). The span at 545 to 554 (AADEPKRELT) shows a compositional bias: basic and acidic residues. Residues 550–608 (KRELTPIEKKIRNVERKLKEVEVLKEKLNSGEFIPPTAIEKINNEQKFLEELRKLQSEL) are a coiled coil.

Belongs to the WD repeat EIF2A family.

Functionally, functions in the early steps of protein synthesis of a small number of specific mRNAs. Acts by directing the binding of methionyl-tRNAi to 40S ribosomal subunits. In contrast to the eIF-2 complex, it binds methionyl-tRNAi to 40S subunits in a codon-dependent manner, whereas the eIF-2 complex binds methionyl-tRNAi to 40S subunits in a GTP-dependent manner. This Dictyostelium discoideum (Social amoeba) protein is Eukaryotic translation initiation factor 2A (eif2a).